Reading from the N-terminus, the 305-residue chain is Ribonuclease H (305 aa).

It catalyses the reaction Endonucleolytic cleavage to 5'-phosphomonoester.. Its function is as follows. Plays essential roles in DNA replication by removing the RNA primers from lagging strand fragments. Exhibits 5'to 3' exonuclease activity on either RNA/DNA or DNA/DNA duplexes and endonuclease activity on either flap or fork DNA structures. This chain is Ribonuclease H (rnh), found in Enterobacteria phage T4 (Bacteriophage T4).